Reading from the N-terminus, the 157-residue chain is SsrA-binding protein (157 aa).

Residues 128–157 are disordered; the sequence is LARGKKQHDKRAAEKERDWEREKQRVMRRG. The segment covering 137–157 has biased composition (basic and acidic residues); it reads KRAAEKERDWEREKQRVMRRG.

The protein belongs to the SmpB family.

The protein resides in the cytoplasm. In terms of biological role, required for rescue of stalled ribosomes mediated by trans-translation. Binds to transfer-messenger RNA (tmRNA), required for stable association of tmRNA with ribosomes. tmRNA and SmpB together mimic tRNA shape, replacing the anticodon stem-loop with SmpB. tmRNA is encoded by the ssrA gene; the 2 termini fold to resemble tRNA(Ala) and it encodes a 'tag peptide', a short internal open reading frame. During trans-translation Ala-aminoacylated tmRNA acts like a tRNA, entering the A-site of stalled ribosomes, displacing the stalled mRNA. The ribosome then switches to translate the ORF on the tmRNA; the nascent peptide is terminated with the 'tag peptide' encoded by the tmRNA and targeted for degradation. The ribosome is freed to recommence translation, which seems to be the essential function of trans-translation. This chain is SsrA-binding protein, found in Methylococcus capsulatus (strain ATCC 33009 / NCIMB 11132 / Bath).